The chain runs to 127 residues: uncharacterized protein (127 aa).

This is an uncharacterized protein from Caenorhabditis elegans.